The sequence spans 196 residues: Molybdenum cofactor guanylyltransferase (196 aa).

Residues 10-12 (LAG), Lys-23, Asn-51, Asp-69, and Asp-99 contribute to the GTP site. Asp-99 contacts Mg(2+).

Belongs to the MobA family. Monomer. Mg(2+) is required as a cofactor.

Its subcellular location is the cytoplasm. The catalysed reaction is Mo-molybdopterin + GTP + H(+) = Mo-molybdopterin guanine dinucleotide + diphosphate. In terms of biological role, transfers a GMP moiety from GTP to Mo-molybdopterin (Mo-MPT) cofactor (Moco or molybdenum cofactor) to form Mo-molybdopterin guanine dinucleotide (Mo-MGD) cofactor. This is Molybdenum cofactor guanylyltransferase from Shewanella baltica (strain OS185).